Reading from the N-terminus, the 356-residue chain is 3-dehydroquinate synthase (356 aa).

NAD(+) is bound by residues 69 to 74 (DGEKFK), 103 to 107 (GVIGD), 127 to 128 (TT), K140, K149, and 167 to 170 (CLKT). Zn(2+)-binding residues include E182, H245, and H262.

The protein belongs to the sugar phosphate cyclases superfamily. Dehydroquinate synthase family. Co(2+) serves as cofactor. The cofactor is Zn(2+). Requires NAD(+) as cofactor.

The protein resides in the cytoplasm. It catalyses the reaction 7-phospho-2-dehydro-3-deoxy-D-arabino-heptonate = 3-dehydroquinate + phosphate. It functions in the pathway metabolic intermediate biosynthesis; chorismate biosynthesis; chorismate from D-erythrose 4-phosphate and phosphoenolpyruvate: step 2/7. Its function is as follows. Catalyzes the conversion of 3-deoxy-D-arabino-heptulosonate 7-phosphate (DAHP) to dehydroquinate (DHQ). This chain is 3-dehydroquinate synthase, found in Psychromonas ingrahamii (strain DSM 17664 / CCUG 51855 / 37).